Consider the following 287-residue polypeptide: Bifunctional protein FolD (287 aa).

NADP(+) is bound by residues 171–173 and I237; that span reads GHS.

The protein belongs to the tetrahydrofolate dehydrogenase/cyclohydrolase family. In terms of assembly, homodimer.

It carries out the reaction (6R)-5,10-methylene-5,6,7,8-tetrahydrofolate + NADP(+) = (6R)-5,10-methenyltetrahydrofolate + NADPH. The catalysed reaction is (6R)-5,10-methenyltetrahydrofolate + H2O = (6R)-10-formyltetrahydrofolate + H(+). The protein operates within one-carbon metabolism; tetrahydrofolate interconversion. Its function is as follows. Catalyzes the oxidation of 5,10-methylenetetrahydrofolate to 5,10-methenyltetrahydrofolate and then the hydrolysis of 5,10-methenyltetrahydrofolate to 10-formyltetrahydrofolate. The chain is Bifunctional protein FolD from Methanosarcina barkeri (strain Fusaro / DSM 804).